The following is a 575-amino-acid chain: MSFKPLLLSLSLLSPALGVAPRQSASCRAIPGDPEWPSTSAWNALNNTVHGRLKATVPLPSVCHHEPFGTYNEDACTALKTEWLDDRTFLNNAAEVMNPGTQNYSCVPFTSPSQPCQLGNYASYSINVTGADDVIAGIRFARQKNIRLVIKNTGHDFAGKSTGTGALSLWTHHLNTTEIISSYESAEYTGPAAKLGAGVISGNVYQVVAEAGYRVMGGTCPTVGLAGGYTSGAGHSLLNGAYGMAADAVLEWEVVTAQGEHLIASQSNNTDLYWALSGGGPGTFAVVLSMTTKVFQDGPIGSGIMLFNLTSDNTEEYWGAIEDLWAFLPEFVDAGPNTWDFALTSTGFQAYAITVPDQNGTQVKSLLQPWLDSIEKRGIQYSYTPTDSPNYLQYFSSRFGPGIAGAGPATVQLASRLIPRAAMYNATQKKVIVSALRAFIEDGEDLELGCHALNVGNIEHPGNAVLPAWRNAIATCNVVNYWDWNITATEMQARKDLLVDRLIPGLEEATPGSGTYLNEIDARWKGDWITELYGDNYDRLLQIKNKYDPEHRFYAWTAVGSDSWFTDGSGRLCRV.

The signal sequence occupies residues 1–18 (MSFKPLLLSLSLLSPALG). Asn-46, Asn-103, Asn-127, Asn-175, Asn-268, Asn-308, Asn-359, Asn-425, and Asn-485 each carry an N-linked (GlcNAc...) asparagine glycan. In terms of domain architecture, FAD-binding PCMH-type spans 118 to 297 (LGNYASYSIN…LSMTTKVFQD (180 aa)).

Belongs to the oxygen-dependent FAD-linked oxidoreductase family.

The protein operates within secondary metabolite biosynthesis. Bifunctional decaline synthase; part of the gene cluster that mediates the biosynthesis of calbistrin A and related compounds. Calbistrin A is a secondary metabolite with an interesting structure that was recently found to have bioactivity against leukemia cells. It consists of two polyketides linked by an ester bond: a bicyclic decalin containing polyketide and a linear 12 carbon dioic acid structure. The polyketide synthase calA is probably responsible for forming the decalin moiety. Because calA lacks a designated enoylreductase (ER) domain, the required activity is provided by the trans-enoyl reductase calK. Following release from the PKS, calF then probably catalyzes the oxidation and the subsequent Diels Alder cycloisomerization that lead to the formation of the decalin moiety. The decalin polyketide backbone includes two C-methyl groups, at C7 and C11 in backbone, of which the C7 position is probably methylated by the methyltransferase domain of calA. A candidate for adding the methyl group at C11, if not done by CalA, is the cluster methyltransferase calH. Several additional tailoring enzymes within the cluster could be involved in the modification of the decalin polyketide product. Those include the 3 cytochrome P450 monooxygenases CalE, CalG and CalL, of which one might be responsible for the introduction of the extra hydroxyl group attached to the backbone of the decalin moiety, at position C9 in the backbone, that allows for attachment of the linear moiety. One tailoring enzyme activity that is expected to be involved in biosynthesis of calbistrin is an acyltransferase for connecting the two polyketide synthase products, and which could be performed by the cluster acyltransferase calJ. The enzyme responsible for the biosynthesis of the linear moiety, probably a second PKS, has not been identified yet. This Penicillium decumbens protein is Bifunctional decalin synthase calF.